A 355-amino-acid polypeptide reads, in one-letter code: Peptide chain release factor 1 (355 aa).

The residue at position 230 (Gln-230) is an N5-methylglutamine.

This sequence belongs to the prokaryotic/mitochondrial release factor family. In terms of processing, methylated by PrmC. Methylation increases the termination efficiency of RF1.

The protein localises to the cytoplasm. Functionally, peptide chain release factor 1 directs the termination of translation in response to the peptide chain termination codons UAG and UAA. This is Peptide chain release factor 1 from Geotalea uraniireducens (strain Rf4) (Geobacter uraniireducens).